A 1114-amino-acid polypeptide reads, in one-letter code: OTU domain-containing protein 4 (1114 aa).

Met1 carries the N-acetylmethionine modification. The disordered stretch occupies residues 1 to 22; sequence MEAAVGVPDGGDQGGAGPREDA. The span at 8–17 shows a compositional bias: gly residues; the sequence is PDGGDQGGAG. Positions 34–155 constitute an OTU domain; sequence LYRKLVAKDG…GNHYDIVYPI (122 aa). The interval 39–45 is cys-loop; that stretch reads VAKDGSC. The active site involves Asp42. Cys45 serves as the catalytic Nucleophile. Residues 94–104 are variable-loop; that stretch reads LENPQEWVGQV. At Tyr120 the chain carries Phosphotyrosine. Ser126 and Ser128 each carry phosphoserine. Thr131 carries the phosphothreonine modification. Positions 143–148 are his-loop; that stretch reads FSNGNH. The active site involves His148. Phosphoserine occurs at positions 166, 199, 202, 204, and 341. The disordered stretch occupies residues 323 to 449; the sequence is KHTSKNLKAP…FGLSPEERRE (127 aa). Over residues 392 to 404 the composition is skewed to low complexity; it reads FSSHSSGSQSQKF. The span at 420 to 435 shows a compositional bias: basic and acidic residues; sequence RKPDRERVEDFDHTSR. Tyr439 is modified (phosphotyrosine). At Ser443 the chain carries Phosphoserine. Position 460 is a phosphotyrosine (Tyr460). The segment at 472–567 is disordered; that stretch reads ALSSSSVNQS…PAEQKPAEHV (96 aa). Residues 474 to 487 are compositionally biased toward low complexity; sequence SSSSVNQSASQSSN. The segment covering 496–529 has biased composition (basic and acidic residues); the sequence is HVGDRKGSRRRMDTEERKDKDSIHGHSQLDKRPE. A phosphoserine mark is found at Ser546, Ser893, and Ser900. Positions 911 to 1114 are disordered; the sequence is EFPEARGEHV…MGDGHRGQHT (204 aa). 2 stretches are compositionally biased toward basic and acidic residues: residues 913 to 922 and 969 to 1000; these read PEARGEHVHS and NRER…DPKT. Phosphoserine occurs at positions 1006, 1011, 1014, 1023, and 1024. A compositionally biased stretch (polar residues) spans 1039–1048; sequence SKQFYNQTYG. Ser1049 is modified (phosphoserine). Basic and acidic residues-rich tracts occupy residues 1067 to 1086 and 1096 to 1114; these read VRSE…EGYQ and FRGD…GQHT.

Interacts with MYD88; the interaction is direct. Interacts with ALKBH3; the interaction is direct. Interacts with USP7; the interaction is direct. Interacts with USP9X; the interaction is direct. Post-translationally, phosphorylated on Ser-202 and Ser-204 likely by CSNK2A1-CSNK2A2 serine/threonine-protein kinase complex. Activates 'Lys-63'-specific deubiquitinase activity.

It localises to the cytoplasm. The protein localises to the nucleus. It catalyses the reaction Thiol-dependent hydrolysis of ester, thioester, amide, peptide and isopeptide bonds formed by the C-terminal Gly of ubiquitin (a 76-residue protein attached to proteins as an intracellular targeting signal).. With respect to regulation, phosphorylation on Ser-202 and Ser-204 induces 'Lys-63'-specific deubiquitinase activity. Deubiquitinase which hydrolyzes the isopeptide bond between the ubiquitin C-terminus and the lysine epsilon-amino group of the target protein. May negatively regulate inflammatory and pathogen recognition signaling in innate immune response. Upon phosphorylation at Ser-202 and Ser-204 residues, via IL-1 receptor and Toll-like receptor signaling pathway, specifically deubiquitinates 'Lys-63'-polyubiquitinated MYD88 adapter protein triggering down-regulation of NF-kappa-B-dependent transcription of inflammatory mediators. Independently of the catalytic activity, acts as a scaffold for alternative deubiquitinases to assemble specific deubiquitinase-substrate complexes. Associates with USP7 and USP9X deubiquitinases to stabilize alkylation repair enzyme ALKBH3, thereby promoting the repair of alkylated DNA lesions. This chain is OTU domain-containing protein 4, found in Homo sapiens (Human).